The chain runs to 91 residues: Putative regulatory protein Tlet_1629 (91 aa).

The protein belongs to the RemA family.

The protein is Putative regulatory protein Tlet_1629 of Pseudothermotoga lettingae (strain ATCC BAA-301 / DSM 14385 / NBRC 107922 / TMO) (Thermotoga lettingae).